The sequence spans 236 residues: 1-(5-phosphoribosyl)-5-[(5-phosphoribosylamino)methylideneamino] imidazole-4-carboxamide isomerase (236 aa).

Catalysis depends on Asp8, which acts as the Proton acceptor. Catalysis depends on Asp129, which acts as the Proton donor.

Belongs to the HisA/HisF family.

The protein localises to the cytoplasm. The enzyme catalyses 1-(5-phospho-beta-D-ribosyl)-5-[(5-phospho-beta-D-ribosylamino)methylideneamino]imidazole-4-carboxamide = 5-[(5-phospho-1-deoxy-D-ribulos-1-ylimino)methylamino]-1-(5-phospho-beta-D-ribosyl)imidazole-4-carboxamide. It functions in the pathway amino-acid biosynthesis; L-histidine biosynthesis; L-histidine from 5-phospho-alpha-D-ribose 1-diphosphate: step 4/9. In Ruminiclostridium cellulolyticum (strain ATCC 35319 / DSM 5812 / JCM 6584 / H10) (Clostridium cellulolyticum), this protein is 1-(5-phosphoribosyl)-5-[(5-phosphoribosylamino)methylideneamino] imidazole-4-carboxamide isomerase.